Consider the following 67-residue polypeptide: Bowman-Birk type proteinase inhibitor A6 (67 aa).

Cystine bridges form between Cys9–Cys66, Cys10–Cys29, Cys13–Cys62, Cys16–Cys27, Cys36–Cys43, and Cys40–Cys54.

It belongs to the Bowman-Birk serine protease inhibitor family. Expressed in bulb (at protein level).

In terms of biological role, serine protease inhibitor. Strongly inhibits trypsin (Ki = 4 nM) and elastase (Ki = 4.8 nM). Also inhibits chymotrypsin with a Ki of 22 nM. Does not inhibit bacterial subtilisin. The polypeptide is Bowman-Birk type proteinase inhibitor A6 (Hyacinthus orientalis (Common hyacinth)).